We begin with the raw amino-acid sequence, 274 residues long: Penicillin-insensitive murein endopeptidase (274 aa).

A signal peptide spans 1–19; it reads MNKTAIALLALLASSASLA. Cystine bridges form between C44–C265, C187–C235, and C216–C223. Zn(2+) contacts are provided by H110, H113, D120, D147, H150, and H211. Positions 227–274 are disordered; it reads PLPPPGDGCGAELQSWFEPPKPGTTKPEKKTPPPLPPSCQALLDEHVI.

The protein belongs to the peptidase M74 family. Dimer. The cofactor is Zn(2+).

The protein resides in the periplasm. Murein endopeptidase that cleaves the D-alanyl-meso-2,6-diamino-pimelyl amide bond that connects peptidoglycan strands. Likely plays a role in the removal of murein from the sacculus. This chain is Penicillin-insensitive murein endopeptidase, found in Escherichia coli O17:K52:H18 (strain UMN026 / ExPEC).